Consider the following 809-residue polypeptide: Leucine--tRNA ligase (809 aa).

The 'HIGH' region motif lies at 40 to 50 (PYPSGRIHMGH). A 'KMSKS' region motif is present at residues 579-583 (KMSKS). Lys-582 is an ATP binding site.

Belongs to the class-I aminoacyl-tRNA synthetase family.

Its subcellular location is the cytoplasm. It catalyses the reaction tRNA(Leu) + L-leucine + ATP = L-leucyl-tRNA(Leu) + AMP + diphosphate. The protein is Leucine--tRNA ligase of Campylobacter jejuni subsp. doylei (strain ATCC BAA-1458 / RM4099 / 269.97).